Here is a 431-residue protein sequence, read N- to C-terminus: Acrosin (431 aa).

The signal sequence occupies residues 1-16; that stretch reads MLPTAVLLVLVVSVVA. The N-linked (GlcNAc...) asparagine glycan is linked to Asn-19. Intrachain disulfides connect Cys-22-Cys-152, Cys-26-Cys-160, Cys-71-Cys-87, Cys-175-Cys-244, Cys-207-Cys-223, and Cys-234-Cys-264. Residues 40 to 288 enclose the Peptidase S1 domain; that stretch reads VVGGQAAQQG…FLDWIASRIG (249 aa). Active-site charge relay system residues include His-86 and Asp-140. An N-linked (GlcNAc...) asparagine glycan is attached at Asn-208. Ser-238 (charge relay system) is an active-site residue. The disordered stretch occupies residues 295-385; sequence IQPATPTPPT…PPPASTKPPQ (91 aa). The segment covering 331 to 341 has biased composition (basic residues); sequence PHPHPHPHPHP. Pro residues predominate over residues 342 to 381; it reads RPPQPPAAQAPPPPPPPPPPPPPPPPPPPPPPPPPPPAST. A propeptide spans 351-431 (pro-rich); the sequence is APPPPPPPPP…TEIPEVTLAS (81 aa).

It belongs to the peptidase S1 family. As to quaternary structure, heavy chain (catalytic) and a light chain linked by two disulfide bonds. Forms a heterodimer with SERPINA5.

The enzyme catalyses Preferential cleavage: Arg-|-Xaa, Lys-|-Xaa.. With respect to regulation, inhibited by SERPINA5. In terms of biological role, acrosin is the major protease of mammalian spermatozoa. It is a serine protease of trypsin-like cleavage specificity, it is synthesized in a zymogen form, proacrosin and stored in the acrosome. The chain is Acrosin (ACR) from Oryctolagus cuniculus (Rabbit).